The following is a 950-amino-acid chain: Translation initiation factor IF-2 (950 aa).

Basic and acidic residues-rich tracts occupy residues 128-158 (KPKV…EAKA), 165-186 (AEVK…EKKK), 200-234 (KRAE…DNRR), and 291-312 (NRRD…DGNR). The disordered stretch occupies residues 128–354 (KPKVAEPVKK…NNQSSSVPAT (227 aa)). 2 stretches are compositionally biased toward polar residues: residues 322–336 (NRNQ…NWNQ) and 343–353 (YQNNQSSSVPA). The tr-type G domain maps to 448–619 (ERPAVVTIMG…LLVAEVQELK (172 aa)). The G1 stretch occupies residues 457 to 464 (GHVDHGKT). A GTP-binding site is contributed by 457 to 464 (GHVDHGKT). Residues 482 to 486 (GITQH) are G2. The interval 503–506 (DTPG) is G3. Residues 503 to 507 (DTPGH) and 557 to 560 (NKID) contribute to the GTP site. Residues 557 to 560 (NKID) form a G4 region. Residues 595–597 (SAK) are G5.

It belongs to the TRAFAC class translation factor GTPase superfamily. Classic translation factor GTPase family. IF-2 subfamily.

It is found in the cytoplasm. Functionally, one of the essential components for the initiation of protein synthesis. Protects formylmethionyl-tRNA from spontaneous hydrolysis and promotes its binding to the 30S ribosomal subunits. Also involved in the hydrolysis of GTP during the formation of the 70S ribosomal complex. The polypeptide is Translation initiation factor IF-2 (Lactococcus lactis subsp. cremoris (strain MG1363)).